We begin with the raw amino-acid sequence, 215 residues long: ATP-dependent Clp protease proteolytic subunit 1 (215 aa).

Catalysis depends on Ser111, which acts as the Nucleophile. His136 is an active-site residue.

It belongs to the peptidase S14 family. As to quaternary structure, fourteen ClpP subunits assemble into 2 heptameric rings which stack back to back to give a disk-like structure with a central cavity, resembling the structure of eukaryotic proteasomes.

It localises to the cytoplasm. The enzyme catalyses Hydrolysis of proteins to small peptides in the presence of ATP and magnesium. alpha-casein is the usual test substrate. In the absence of ATP, only oligopeptides shorter than five residues are hydrolyzed (such as succinyl-Leu-Tyr-|-NHMec, and Leu-Tyr-Leu-|-Tyr-Trp, in which cleavage of the -Tyr-|-Leu- and -Tyr-|-Trp bonds also occurs).. Cleaves peptides in various proteins in a process that requires ATP hydrolysis. Has a chymotrypsin-like activity. Plays a major role in the degradation of misfolded proteins. The chain is ATP-dependent Clp protease proteolytic subunit 1 from Gluconobacter oxydans (strain 621H) (Gluconobacter suboxydans).